Consider the following 2537-residue polypeptide: Histone-lysine N-methyltransferase SETD2 (2537 aa).

Positions 1 to 12 (MKPLPSQQPPPK) are enriched in pro residues. 5 disordered regions span residues 1-31 (MKPLPSQQPPPKMGDFYDPEHPTPEEEENEA), 91-142 (TALS…ELGR), 156-483 (PQLA…RDLR), 510-554 (YTSK…STSR), and 607-629 (SEREKTGSPTPSNQLNDSPTFKK). A compositionally biased stretch (basic and acidic residues) spans 18–31 (DPEHPTPEEEENEA). The segment covering 91–103 (TALSNEKQSDSPN) has biased composition (polar residues). Phosphoserine is present on S132. The span at 156 to 166 (PQLAASTTAAS) shows a compositional bias: low complexity. The segment covering 187 to 205 (PSSPPPPPPPPQASSPSPP) has biased composition (pro residues). The residue at position 242 (S242) is a Phosphoserine. Over residues 264 to 291 (LEEHTVQTLKEQADHLLQKEDSHIGKEE) the composition is skewed to basic and acidic residues. Phosphoserine occurs at positions 322, 324, and 345. Basic and acidic residues-rich tracts occupy residues 336 to 401 (RSHD…ERDR), 422 to 433 (RSERSHYYDSER), 440 to 468 (PYRERTRYSRPYTDNRARESSDSEDEYKK), and 510 to 528 (YTSKLERESKRTSEHETIK). A Glycyl lysine isopeptide (Lys-Gly) (interchain with G-Cter in SUMO2) cross-link involves residue K360. S423 carries the post-translational modification Phosphoserine. S532, S614, and S624 each carry phosphoserine. Polar residues predominate over residues 613–625 (GSPTPSNQLNDSP). Phosphothreonine is present on T626. Residue S633 is modified to Phosphoserine. A Glycyl lysine isopeptide (Lys-Gly) (interchain with G-Cter in SUMO2) cross-link involves residue K637. Phosphoserine is present on residues S697, S707, S743, and S753. Positions 729–749 (RDSDDTCRQHNTSKSPFREME) are disordered. K775 is covalently cross-linked (Glycyl lysine isopeptide (Lys-Gly) (interchain with G-Cter in SUMO2)). Disordered stretches follow at residues 829-894 (CDNR…PTLD), 941-974 (QEAQEEGNSILHERRGRPEIPLDEEQRGHTHISD), 1015-1078 (EDYS…HYSD), and 1135-1185 (AHAQ…EDLP). The span at 830-847 (DNREPTDRHSENTCDEYK) shows a compositional bias: basic and acidic residues. A compositionally biased stretch (polar residues) spans 849–858 (SIGSTSSASH). Residues 867-883 (PIGSSGISSLQSPPSGI) are compositionally biased toward low complexity. Residues 951 to 974 (LHERRGRPEIPLDEEQRGHTHISD) are compositionally biased toward basic and acidic residues. Acidic residues predominate over residues 1026-1037 (DESDSEDTESDD). S1077 carries the post-translational modification Phosphoserine. Basic and acidic residues predominate over residues 1150–1165 (SRSDHLGHLNPEDTLR). S1201 bears the Phosphoserine mark. Disordered stretches follow at residues 1232–1254 (GWDFSQQERPTTTYQQPDSSYGT), 1280–1346 (WDPR…APEI), and 1366–1396 (NFEKNDIKERGPPKKRRQELESDSESDGELQ). 2 stretches are compositionally biased toward polar residues: residues 1235–1254 (FSQQERPTTTYQQPDSSYGT) and 1319–1329 (RSGSHFSSPSN). The segment covering 1366-1377 (NFEKNDIKERGP) has biased composition (basic and acidic residues). S1387, S1389, and S1391 each carry phosphoserine. Residues 1392–1688 (DGELQARKKV…KKERSRKKDS (297 aa)) form an interaction with TUBA1A region. One can recognise an AWS domain in the interval 1468-1522 (IKRMQCECTPLSKDERAQGEVACGEDCLNRLLMIECSSRCPNGDYCSNRRFQRKQ). Zn(2+)-binding residues include C1473, C1475, C1490, C1494, C1503, C1507, and C1513. Residues 1524 to 1641 (ADVEVILTEK…SGSELTFDYQ (118 aa)) form the SET domain. S-adenosyl-L-methionine is bound by residues 1534 to 1536 (KGW), 1577 to 1579 (HYY), and 1602 to 1603 (NH). Residue C1605 coordinates Zn(2+). Residues 1648 to 1664 (EAQKCFCGSANCRGYLG) enclose the Post-SET domain. Q1650 is a binding site for S-adenosyl-L-methionine. A Zn(2+)-binding site is contributed by C1652. F1653 is an S-adenosyl-L-methionine binding site. Residues C1654 and C1659 each coordinate Zn(2+). Phosphoserine is present on residues S1670, S1818, and S1819. The disordered stretch occupies residues 1806 to 1848 (TAVPQLSEGDGYSSENTSRAHTPLNTPDPSAKPSTEMDTDTPK). Residues 1818–1833 (SSENTSRAHTPLNTPD) show a composition bias toward polar residues. Residues T1827 and T1846 each carry the phosphothreonine modification. 2 positions are modified to phosphoserine: S1862 and S1926. 2 disordered regions span residues 1914-1981 (SEAT…DISD) and 1993-2110 (LKEV…AQKQ). A compositionally biased stretch (basic and acidic residues) spans 1934 to 1946 (TEPKDSNGTKLEE). Over residues 1947-1964 (TIAEETPSQDEEEGVSDV) the composition is skewed to acidic residues. Residues S1954, S1962, and S1969 each carry the phosphoserine modification. Basic and acidic residues-rich tracts occupy residues 1965-1978 (ESERSQEPPDKTVD), 1993-2020 (LKEVYRIPKKSQTEKESTVAERGRDAAA), and 2032-2045 (RSRERDPDKQSQNK). Phosphoserine is present on residues S2053 and S2055. Composition is skewed to basic and acidic residues over residues 2063–2073 (RGTKRPDDRYD) and 2084–2108 (KDRNKLSTEERRKLFEQEVAQREAQ). Residues 2090 to 2119 (STEERRKLFEQEVAQREAQKQQQQMQNLGM) are a coiled coil. Positions 2110–2339 (QQQQMQNLGM…APGQPQSLQP (230 aa)) are low charge region. The region spanning 2362 to 2395 (IVLPPNWKTARDPEGKIYYYHVITRQTQWDPPTW) is the WW domain. Residues 2412–2438 (LGTPTYDENPMKTSKKPKTAEADTSSE) are disordered. Residues 2430-2537 (TAEADTSSEL…YKPKEDTELE (108 aa)) are interaction with POLR2A.

Belongs to the class V-like SAM-binding methyltransferase superfamily. Histone-lysine methyltransferase family. SET2 subfamily. As to quaternary structure, specifically interacts with hyperphosphorylated C-terminal domain (CTD) of RNA polymerase II large subunit (POLR2A): binds to CTD heptad repeats doubly phosphorylated on 'Ser-2' and 'Ser-5' of each heptad. Interacts with HTT. Interacts with IWS1. Interacts with p53/TP53; leading to regulate p53/TP53 target genes. Component of a complex with HNRNPL. Interacts with TUBA1A; the interaction is independent on alpha-tubulin acetylation on 'Lys-40'. In terms of processing, may be automethylated.

It is found in the nucleus. It localises to the chromosome. It catalyses the reaction L-lysyl(36)-[histone H3] + 3 S-adenosyl-L-methionine = N(6),N(6),N(6)-trimethyl-L-lysyl(36)-[histone H3] + 3 S-adenosyl-L-homocysteine + 3 H(+). It carries out the reaction L-lysyl-[protein] + S-adenosyl-L-methionine = N(6)-methyl-L-lysyl-[protein] + S-adenosyl-L-homocysteine + H(+). The catalysed reaction is L-lysyl-[protein] + 3 S-adenosyl-L-methionine = N(6),N(6),N(6)-trimethyl-L-lysyl-[protein] + 3 S-adenosyl-L-homocysteine + 3 H(+). Its activity is regulated as follows. Specifically inhibited by sinefungin derivatives. Histone methyltransferase that specifically trimethylates 'Lys-36' of histone H3 (H3K36me3) using dimethylated 'Lys-36' (H3K36me2) as substrate. It is capable of trimethylating unmethylated H3K36 (H3K36me0) in vitro. Represents the main enzyme generating H3K36me3, a specific tag for epigenetic transcriptional activation. Plays a role in chromatin structure modulation during elongation by coordinating recruitment of the FACT complex and by interacting with hyperphosphorylated POLR2A. Acts as a key regulator of DNA mismatch repair in G1 and early S phase by generating H3K36me3, a mark required to recruit MSH6 subunit of the MutS alpha complex: early recruitment of the MutS alpha complex to chromatin to be replicated allows a quick identification of mismatch DNA to initiate the mismatch repair reaction. Required for DNA double-strand break repair in response to DNA damage: acts by mediating formation of H3K36me3, promoting recruitment of RAD51 and DNA repair via homologous recombination (HR). Acts as a tumor suppressor. H3K36me3 also plays an essential role in the maintenance of a heterochromatic state, by recruiting DNA methyltransferase DNMT3A. H3K36me3 is also enhanced in intron-containing genes, suggesting that SETD2 recruitment is enhanced by splicing and that splicing is coupled to recruitment of elongating RNA polymerase. Required during angiogenesis. Required for endoderm development by promoting embryonic stem cell differentiation toward endoderm: acts by mediating formation of H3K36me3 in distal promoter regions of FGFR3, leading to regulate transcription initiation of FGFR3. In addition to histones, also mediates methylation of other proteins, such as tubulins and STAT1. Trimethylates 'Lys-40' of alpha-tubulins such as TUBA1B (alpha-TubK40me3); alpha-TubK40me3 is required for normal mitosis and cytokinesis and may be a specific tag in cytoskeletal remodeling. Involved in interferon-alpha-induced antiviral defense by mediating both monomethylation of STAT1 at 'Lys-525' and catalyzing H3K36me3 on promoters of some interferon-stimulated genes (ISGs) to activate gene transcription. In Mus musculus (Mouse), this protein is Histone-lysine N-methyltransferase SETD2.